Here is a 253-residue protein sequence, read N- to C-terminus: DNA repair protein RecO (253 aa).

The protein belongs to the RecO family.

In terms of biological role, involved in DNA repair and RecF pathway recombination. The chain is DNA repair protein RecO from Dehalococcoides mccartyi (strain ATCC BAA-2100 / JCM 16839 / KCTC 5957 / BAV1).